Consider the following 303-residue polypeptide: Signal recognition particle receptor FtsY (303 aa).

GTP-binding positions include 108 to 115 (GVNGAGKT), 190 to 194 (DTAGR), and 254 to 257 (TKLD).

This sequence belongs to the GTP-binding SRP family. FtsY subfamily. As to quaternary structure, part of the signal recognition particle protein translocation system, which is composed of SRP and FtsY. SRP is a ribonucleoprotein composed of Ffh and a 4.5S RNA molecule.

It is found in the cell inner membrane. The protein resides in the cytoplasm. The catalysed reaction is GTP + H2O = GDP + phosphate + H(+). Functionally, involved in targeting and insertion of nascent membrane proteins into the cytoplasmic membrane. Acts as a receptor for the complex formed by the signal recognition particle (SRP) and the ribosome-nascent chain (RNC). Interaction with SRP-RNC leads to the transfer of the RNC complex to the Sec translocase for insertion into the membrane, the hydrolysis of GTP by both Ffh and FtsY, and the dissociation of the SRP-FtsY complex into the individual components. In Rickettsia felis (strain ATCC VR-1525 / URRWXCal2) (Rickettsia azadi), this protein is Signal recognition particle receptor FtsY.